Consider the following 236-residue polypeptide: MRQHVNPLSRFFQLPLQLPSPGELFDHPEQPIHLDIGCARGRCILGLAELNPGWNHLGVEIRRPLVTAADRDALNSGSGNVRVLFCNANISLESWLAALPNDRLQRVSVQFPDPWFKRRHRKRRVLQPALLLAIAAALQPGRELFLQSDVLAVIEPMVALTELSGCFTRPESDARPWRADNPLPVPTEREQYVLEKNLPVYRVLYRRNASPLPDPEALKSRWQELDNPAETVFTDI.

S-adenosyl-L-methionine contacts are provided by Asp-35, Glu-60, Asn-87, and Asp-113. Asp-113 is a catalytic residue. Lys-117 and Asp-149 together coordinate substrate.

It belongs to the class I-like SAM-binding methyltransferase superfamily. TrmB family.

It catalyses the reaction guanosine(46) in tRNA + S-adenosyl-L-methionine = N(7)-methylguanosine(46) in tRNA + S-adenosyl-L-homocysteine. Its pathway is tRNA modification; N(7)-methylguanine-tRNA biosynthesis. Catalyzes the formation of N(7)-methylguanine at position 46 (m7G46) in tRNA. This is tRNA (guanine-N(7)-)-methyltransferase from Parasynechococcus marenigrum (strain WH8102).